We begin with the raw amino-acid sequence, 646 residues long: ATP-dependent zinc metalloprotease FtsH (646 aa).

The interval 1-27 (MTNNQTDRPRPPGPESRRFDNNDKNNR) is disordered. Topologically, residues 1-35 (MTNNQTDRPRPPGPESRRFDNNDKNNRNRWGPIPS) are cytoplasmic. The span at 7 to 26 (DRPRPPGPESRRFDNNDKNN) shows a compositional bias: basic and acidic residues. Residues 36 to 56 (WAWIVLIVALLLNWLVAPILF) traverse the membrane as a helical segment. Residues 57 to 144 (PEGKGAVSIP…QPESSTRSLL (88 aa)) lie on the Extracellular side of the membrane. Residues 145-165 (LSILISFGPTILFFLLFLWLI) form a helical membrane-spanning segment. At 166–646 (SKAQSSQQGL…GLGEKQPEPA (481 aa)) the chain is on the cytoplasmic side. 237 to 244 (GPPGTGKT) is a binding site for ATP. Histidine 459 is a binding site for Zn(2+). The active site involves glutamate 460. Residues histidine 463 and aspartate 535 each contribute to the Zn(2+) site.

It in the central section; belongs to the AAA ATPase family. The protein in the C-terminal section; belongs to the peptidase M41 family. As to quaternary structure, homohexamer. It depends on Zn(2+) as a cofactor.

Its subcellular location is the cell membrane. Functionally, acts as a processive, ATP-dependent zinc metallopeptidase for both cytoplasmic and membrane proteins. Plays a role in the quality control of integral membrane proteins. This is ATP-dependent zinc metalloprotease FtsH from Thermobaculum terrenum (strain ATCC BAA-798 / CCMEE 7001 / YNP1).